We begin with the raw amino-acid sequence, 189 residues long: UPF0301 protein RAF_ORF0041 (189 aa).

This sequence belongs to the UPF0301 (AlgH) family.

This is UPF0301 protein RAF_ORF0041 from Rickettsia africae (strain ESF-5).